We begin with the raw amino-acid sequence, 529 residues long: NADPH-dependent thioredoxin reductase 3 (529 aa).

A chloroplast-targeting transit peptide spans 1–67; sequence MAASPKIGIG…SSDSLRLRVS (67 aa). Positions 54-78 are disordered; the sequence is TRTRSSDSLRLRVSATANSPSSSSS. The segment covering 64–78 has biased composition (low complexity); that stretch reads LRVSATANSPSSSSS. FAD-binding positions include 91-94, 113-120, asparagine 133, valine 166, and cysteine 220; these read SGPA and EGYQMGGV. Cysteine 217 and cysteine 220 form a disulfide bridge. Residues threonine 240, arginine 265, isoleucine 324, and tyrosine 344 each coordinate NADP(+). FAD contacts are provided by residues aspartate 364 and 371–374; that span reads RQAV. Arginine 371 is an NADP(+) binding site. The region spanning 403-529 is the Thioredoxin domain; it reads PQTEEAKKEF…EYREFIEANK (127 aa). Catalysis depends on nucleophile residues cysteine 454 and cysteine 457. Cysteine 454 and cysteine 457 are disulfide-bonded.

This sequence belongs to the class-II pyridine nucleotide-disulfide oxidoreductase family. As to quaternary structure, may homodimerize. Interacts with the 2-Cys peroxiredoxin BAS1. FAD serves as cofactor.

The protein resides in the plastid. Its subcellular location is the chloroplast. It catalyses the reaction [thioredoxin]-dithiol + NADP(+) = [thioredoxin]-disulfide + NADPH + H(+). Functionally, thioredoxin reductase (TR) that exhibits both TR and thioredoxin (Trx) activities. Contains a C-terminal functional Trx domain. Functions as an electron donor for plastidial 2-Cys peroxiredoxins and participates in a NADPH-dependent hydrogen peroxide scavenging system in chloroplasts in the dark. Required for chlorophyll biosynthesis and biogenesis of the photosynthetic apparatus. Activates aerobic cyclase which converts Mg-protoporhyrin monomethyl ester into protochlorophyllide. Involved in a light-dependent regulation of starch biosynthesis by redox activation of the ADP-glucose pyrophosphorylase (AGPase), a central enzyme of starch synthesis. This is NADPH-dependent thioredoxin reductase 3 from Arabidopsis thaliana (Mouse-ear cress).